Reading from the N-terminus, the 261-residue chain is Expansin-B2 (261 aa).

A signal peptide spans 1–24 (MAGASAKVVAMLLSVLATYGFAAG). Residues 51–157 (GGACGFKNTN…RRVPCYHRGL (107 aa)) form the Expansin-like EG45 domain. 3 disulfides stabilise this stretch: cysteine 54/cysteine 82, cysteine 85/cysteine 152, and cysteine 90/cysteine 96. The Expansin-like CBD domain maps to 170–256 (VYLAVLVEFA…NWRANTNYGS (87 aa)).

The protein belongs to the expansin family. Expansin B subfamily. In terms of tissue distribution, expressed in roots.

It localises to the secreted. The protein localises to the cell wall. It is found in the membrane. In terms of biological role, may cause loosening and extension of plant cell walls by disrupting non-covalent bonding between cellulose microfibrils and matrix glucans. No enzymatic activity has been found. May be required for rapid internodal elongation in deepwater rice during submergence. This Oryza sativa subsp. japonica (Rice) protein is Expansin-B2 (EXPB2).